The primary structure comprises 335 residues: Glucokinase (335 aa).

11 to 16 (ADIGGT) provides a ligand contact to ATP.

This sequence belongs to the bacterial glucokinase family.

Its subcellular location is the cytoplasm. It carries out the reaction D-glucose + ATP = D-glucose 6-phosphate + ADP + H(+). This is Glucokinase from Stenotrophomonas maltophilia (strain R551-3).